We begin with the raw amino-acid sequence, 470 residues long: Argininosuccinate lyase (470 aa).

Belongs to the lyase 1 family. Argininosuccinate lyase subfamily.

It localises to the cytoplasm. The enzyme catalyses 2-(N(omega)-L-arginino)succinate = fumarate + L-arginine. The protein operates within amino-acid biosynthesis; L-arginine biosynthesis; L-arginine from L-ornithine and carbamoyl phosphate: step 3/3. The sequence is that of Argininosuccinate lyase from Mycobacterium sp. (strain MCS).